The following is a 264-amino-acid chain: Thymidylate synthase (264 aa).

A dUMP-binding site is contributed by R21. H51 lines the (6R)-5,10-methylene-5,6,7,8-tetrahydrofolate pocket. Residue 126 to 127 (RR) participates in dUMP binding. C146 acts as the Nucleophile in catalysis. Residues 166-169 (RSVD), N177, and 207-209 (HLY) each bind dUMP. Residue D169 coordinates (6R)-5,10-methylene-5,6,7,8-tetrahydrofolate. Position 263 (A263) interacts with (6R)-5,10-methylene-5,6,7,8-tetrahydrofolate.

This sequence belongs to the thymidylate synthase family. Bacterial-type ThyA subfamily. In terms of assembly, homodimer.

The protein localises to the cytoplasm. It carries out the reaction dUMP + (6R)-5,10-methylene-5,6,7,8-tetrahydrofolate = 7,8-dihydrofolate + dTMP. Its pathway is pyrimidine metabolism; dTTP biosynthesis. In terms of biological role, catalyzes the reductive methylation of 2'-deoxyuridine-5'-monophosphate (dUMP) to 2'-deoxythymidine-5'-monophosphate (dTMP) while utilizing 5,10-methylenetetrahydrofolate (mTHF) as the methyl donor and reductant in the reaction, yielding dihydrofolate (DHF) as a by-product. This enzymatic reaction provides an intracellular de novo source of dTMP, an essential precursor for DNA biosynthesis. The polypeptide is Thymidylate synthase (Geobacillus thermodenitrificans (strain NG80-2)).